The sequence spans 124 residues: Small ribosomal subunit protein uS13c (124 aa).

The interval 100–124 is disordered; that stretch reads GQRTRTNARTRKGKVKTAVAKKKGR. The span at 101-124 shows a compositional bias: basic residues; it reads QRTRTNARTRKGKVKTAVAKKKGR.

Belongs to the universal ribosomal protein uS13 family. In terms of assembly, part of the 30S ribosomal subunit.

Its subcellular location is the plastid. It is found in the chloroplast. Functionally, located at the top of the head of the 30S subunit, it contacts several helices of the 16S rRNA. This chain is Small ribosomal subunit protein uS13c, found in Emiliania huxleyi (Coccolithophore).